A 189-amino-acid polypeptide reads, in one-letter code: Ribose 1,5-bisphosphate phosphokinase PhnN (189 aa).

10–17 (GPSGSGKD) contacts ATP.

This sequence belongs to the ribose 1,5-bisphosphokinase family.

The catalysed reaction is alpha-D-ribose 1,5-bisphosphate + ATP = 5-phospho-alpha-D-ribose 1-diphosphate + ADP. The protein operates within metabolic intermediate biosynthesis; 5-phospho-alpha-D-ribose 1-diphosphate biosynthesis; 5-phospho-alpha-D-ribose 1-diphosphate from D-ribose 5-phosphate (route II): step 3/3. In terms of biological role, catalyzes the phosphorylation of ribose 1,5-bisphosphate to 5-phospho-D-ribosyl alpha-1-diphosphate (PRPP). The protein is Ribose 1,5-bisphosphate phosphokinase PhnN of Enterobacter lignolyticus (strain SCF1).